We begin with the raw amino-acid sequence, 789 residues long: Glycerol-3-phosphate acyltransferase (789 aa).

The short motif at histidine 276–aspartate 281 is the HXXXXD motif element.

It belongs to the GPAT/DAPAT family.

The protein localises to the cell membrane. It carries out the reaction sn-glycerol 3-phosphate + an acyl-CoA = a 1-acyl-sn-glycero-3-phosphate + CoA. It participates in phospholipid metabolism; CDP-diacylglycerol biosynthesis; CDP-diacylglycerol from sn-glycerol 3-phosphate: step 1/3. This Mycobacterium bovis (strain ATCC BAA-935 / AF2122/97) protein is Glycerol-3-phosphate acyltransferase.